The following is a 429-amino-acid chain: Histidine--tRNA ligase (429 aa).

It belongs to the class-II aminoacyl-tRNA synthetase family. As to quaternary structure, homodimer.

The protein localises to the cytoplasm. It catalyses the reaction tRNA(His) + L-histidine + ATP = L-histidyl-tRNA(His) + AMP + diphosphate + H(+). The sequence is that of Histidine--tRNA ligase from Pseudomonas aeruginosa (strain LESB58).